Here is a 375-residue protein sequence, read N- to C-terminus: MVLPLILTLVIVAPIFLWMYSWYISAIPKHYVKPGTKLQKKVHSNLRILEQKYHPSWWCPFGTTQTVVRQIFRDCPSLPFTREIVEFDDGGAAGIDWLIPEGADDTTPIVVFLPGITGSTHDSSYVLHPVKEARDKGWKCVVVNPRGLGGVKLRTTRTYNAATPHDFAFIAKMINERYPDAKKLGCGFSMGGMILWNYLAMTGENADLDGGMIVSSPWDPLVASDSIECFIPQLIFNSFIAKNLVDMVRPYRELFKDMVDFDEVCRCNTVRGFDRSFVIPMYGFKSCDDYYRQATLATKVDKIKIPCVTLNSVDDYFSPVECIPTLDIMESDYVCGIITNHGGHTAFMESADPNARGMVEKLLSQWGNMIFHDYS.

An AB hydrolase-1 domain is found at 108 to 203 (PIVVFLPGIT…ILWNYLAMTG (96 aa)). Catalysis depends on charge relay system residues S189, D315, and H344.

Belongs to the AB hydrolase superfamily. AB hydrolase 4 family.

In Caenorhabditis elegans, this protein is Protein abhd-3.2.